Here is a 568-residue protein sequence, read N- to C-terminus: Glucose-6-phosphate isomerase, cytosolic 1 (568 aa).

Catalysis depends on glutamate 360, which acts as the Proton donor. Catalysis depends on residues histidine 391 and lysine 516.

It belongs to the GPI family. Homodimer.

It is found in the cytoplasm. The enzyme catalyses alpha-D-glucose 6-phosphate = beta-D-fructose 6-phosphate. It functions in the pathway carbohydrate degradation; glycolysis; D-glyceraldehyde 3-phosphate and glycerone phosphate from D-glucose: step 2/4. This chain is Glucose-6-phosphate isomerase, cytosolic 1 (PGIC1), found in Clarkia mildrediae.